Consider the following 127-residue polypeptide: Sulfiredoxin (127 aa).

Belongs to the sulfiredoxin family. Mg(2+) is required as a cofactor. Forms a transient disulfide bond with TSA1 during the reduction of cysteine sulfinic acid (-SO2H).

The protein resides in the cytoplasm. It localises to the nucleus. The catalysed reaction is S-hydroxy-S-oxy-L-cysteinyl-[peroxiredoxin] + [protein]-dithiol + ATP = S-hydroxy-L-cysteinyl-[peroxiredoxin] + [protein]-disulfide + ADP + phosphate. Contributes to oxidative stress resistance by reducing cysteine-sulfinic acid formed under exposure to oxidants in the peroxiredoxin TSA1. May catalyze the reduction in a multi-step process by acting both as a specific phosphotransferase and as thioltransferase. In Saccharomyces cerevisiae (strain ATCC 204508 / S288c) (Baker's yeast), this protein is Sulfiredoxin.